The primary structure comprises 326 residues: Malate dehydrogenase (326 aa).

12–18 (GAAGQIA) is a binding site for NAD(+). Residues R93 and R99 each coordinate substrate. Residues N106, Q113, and 130 to 132 (VGN) each bind NAD(+). 2 residues coordinate substrate: N132 and R163. H188 functions as the Proton acceptor in the catalytic mechanism.

Belongs to the LDH/MDH superfamily. MDH type 2 family.

It catalyses the reaction (S)-malate + NAD(+) = oxaloacetate + NADH + H(+). In terms of biological role, catalyzes the reversible oxidation of malate to oxaloacetate. In Corynebacterium diphtheriae (strain ATCC 700971 / NCTC 13129 / Biotype gravis), this protein is Malate dehydrogenase.